A 508-amino-acid polypeptide reads, in one-letter code: Immunoglobulin G-binding protein A (508 aa).

A signal peptide spans 1–36; it reads MKKKNIYSIRKLGVGIASVTLGTLLISGGVTPAANA. A YSIRK-G/S signaling motif motif is present at residues 7 to 18; the sequence is YSIRKLGVGIAS. The stretch at 37-92 is one Immunoglobulin-binding region E repeat; sequence AQHDEAQQNAFYQVLNMPNLNADQRNGFIQSLKDDPSQSANVLGEAQKLNDSQAPK. The Immunoglobulin-binding region D repeat unit spans residues 93 to 153; that stretch reads ADAQQNNFNK…KKLNESQAPK (61 aa). The stretch at 154–211 is one Immunoglobulin-binding region A repeat; it reads ADNNFNKEQQNAFYEILNMPNLNEEQRNGFIQSLKDDPSQSANLLSEAKKLNESQAPK. The stretch at 212 to 269 is one Immunoglobulin-binding region B repeat; that stretch reads ADNKFNKEQQNAFYEILHLPNLNEEQRNGFIQSLKDDPSQSANLLAEAKKLNDAQAPK. The stretch at 270 to 327 is one Immunoglobulin-binding region C repeat; sequence ADNKFNKEQQNAFYEILHLPNLTEEQRNGFIQSLKDDPSVSKEILAEAKKLNDAQAPK. Residues 318–412 show a composition bias toward basic and acidic residues; that stretch reads KKLNDAQAPK…GNKPGKEDGN (95 aa). 2 disordered regions span residues 318 to 421 and 459 to 479; these read KKLN…KPGD and KKQPANHADANKAQALPETGE. 10 consecutive repeat copies span residues 333 to 340, 341 to 348, 349 to 356, 357 to 364, 365 to 372, 373 to 380, 381 to 388, 389 to 396, 397 to 404, and 405 to 412. Positions 333–412 are 10 X 8 AA approximate tandem repeats; the sequence is KPGKEDNNKP…GNKPGKEDGN (80 aa). The LysM domain maps to 413–457; that stretch reads GVHVVKPGDTVNDIAKANGTTADKIAADNKLADKNMIKPGQELVV. Residues 474-478 carry the LPXTG sorting signal motif; the sequence is LPETG. Residue threonine 477 is modified to Pentaglycyl murein peptidoglycan amidated threonine. A propeptide spans 478-508 (removed by sortase); it reads GEENPFIGTTVFGGLSLALGAALLAGRRREL.

The protein belongs to the immunoglobulin-binding protein SpA family. In terms of assembly, interacts with host TNFRSF1A; this interaction leads to the stimulation of both surface expression and shedding of TNFRSF1A.

The protein resides in the secreted. It is found in the cell wall. Its function is as follows. Plays a role in the inhibition of the host innate and adaptive immune responses. Possesses five immunoglobulin-binding domains that capture both the fragment crystallizable region (Fc region) and the Fab region (part of Ig that identifies antigen) of immunoglobulins. In turn, Staphylococcus aureus is protected from phagocytic killing via inhibition of Ig Fc region. In addition, the host elicited B-cell response is prevented due to a decrease of antibody-secreting cell proliferation that enter the bone marrow, thereby decreasing long-term antibody production. Inhibits osteogenesis by preventing osteoblast proliferation and expression of alkaline phosphatase, type I collagen, osteopontin and osteocalcin. Acts directly as a pro-inflammatory factor in the lung through its ability to bind and activate tumor necrosis factor alpha receptor 1/TNFRSF1A. The chain is Immunoglobulin G-binding protein A (spa) from Staphylococcus aureus (strain Newman).